The sequence spans 172 residues: Major exported protein (172 aa).

This sequence belongs to the hcp1 family.

The protein resides in the secreted. This is Major exported protein (hcpA) from Pseudomonas aeruginosa (strain ATCC 15692 / DSM 22644 / CIP 104116 / JCM 14847 / LMG 12228 / 1C / PRS 101 / PAO1).